The following is a 290-amino-acid chain: Protein SET (290 aa).

Positions 1 to 45 (MAPKRQSPLPPQKKKPRPPPALGPEETSASAGLPKKGEKEQQEAI) are disordered. Position 2 is a n,N,N-trimethylalanine (alanine 2). Serine 7 is modified (phosphoserine). Residue proline 11 is modified to N6-acetyllysine. A phosphoserine mark is found at lysine 15, proline 24, and serine 28. A dimerization region spans residues 31 to 78 (AGLPKKGEKEQQEAIEHIDEVQNEIDRLNEQASEEILKVEQKYNKLRQ). The segment covering 35 to 45 (KKGEKEQQEAI) has biased composition (basic and acidic residues). Serine 63 carries the phosphoserine modification. Position 68 is an N6-acetyllysine (lysine 68). The interval 79 to 225 (PFFQKRSELI…ELGEVIKDDI (147 aa)) is earmuff domain. Phosphotyrosine is present on tyrosine 146. N6-acetyllysine is present on lysine 150. Residue lysine 154 forms a Glycyl lysine isopeptide (Lys-Gly) (interchain with G-Cter in ubiquitin) linkage. Disordered regions lie at residues 158 to 207 (LNES…TWFT) and 236 to 290 (PDMD…GEDD). The segment covering 169 to 181 (TEIKWKSGKDLTK) has biased composition (basic and acidic residues). N6-acetyllysine is present on lysine 172. Residues 237 to 290 (DMDDEEGEGEEDDDDDEEEEGLEDIDEEGDEDEGEEDEDDDEGEEGEEDEGEDD) are compositionally biased toward acidic residues.

Belongs to the nucleosome assembly protein (NAP) family. As to quaternary structure, headphone-shaped homodimer. Isoforms 1 and 2 interact directly with each other and with ANP32A within the tripartite INHAT (inhibitor of acetyltransferases) complex. Isoform 1 and isoform 2 interact also with histones. Isoform 2 is a component of the SET complex, composed of at least ANP32A, APEX1, HMGB2, NME1, SET and TREX1, but not NME2 or TREX2. Within this complex, directly interacts with ANP32A, NME1, HMGB2 and TREX1; the interaction with ANP32A is enhanced after cleavage. Interacts with APBB1, CHTOP, SETBP1, SGO1. (Microbial infection) Interacts with herpes simplex virus 1 VP22. In terms of processing, isoform 2 is phosphorylated on Ser-15 and Ser-24. Post-translationally, isoform 2 is acetylated on Lys-11. Some glutamate residues are glycylated by TTLL8. This modification occurs exclusively on glutamate residues and results in a glycine chain on the gamma-carboxyl group. In terms of processing, N-terminus of isoform 1 is methylated by METTL11A/NTM1. Mainly trimethylated. Post-translationally, cleaved after Lys-176 by GZMA. The cleavage inhibits its nucleosome assembly activity and disrupts the inhibition on NME1. Widely expressed. Low levels in quiescent cells during serum starvation, contact inhibition or differentiation. Highly expressed in Wilms' tumor.

It is found in the cytoplasm. The protein localises to the cytosol. The protein resides in the endoplasmic reticulum. Its subcellular location is the nucleus. It localises to the nucleoplasm. Functionally, multitasking protein, involved in apoptosis, transcription, nucleosome assembly and histone chaperoning. Isoform 2 anti-apoptotic activity is mediated by inhibition of the GZMA-activated DNase, NME1. In the course of cytotoxic T-lymphocyte (CTL)-induced apoptosis, GZMA cleaves SET, disrupting its binding to NME1 and releasing NME1 inhibition. Isoform 1 and isoform 2 are potent inhibitors of protein phosphatase 2A. Isoform 1 and isoform 2 inhibit EP300/CREBBP and PCAF-mediated acetylation of histones (HAT) and nucleosomes, most probably by masking the accessibility of lysines of histones to the acetylases. The predominant target for inhibition is histone H4. HAT inhibition leads to silencing of HAT-dependent transcription and prevents active demethylation of DNA. Both isoforms stimulate DNA replication of the adenovirus genome complexed with viral core proteins; however, isoform 2 specific activity is higher. This chain is Protein SET (SET), found in Homo sapiens (Human).